Reading from the N-terminus, the 820-residue chain is Probable beta-glucosidase ARB_05654 (820 aa).

Residues 1–18 (MLFRWCPLVALAIASGTA) form the signal peptide. N-linked (GlcNAc...) asparagine glycans are attached at residues N62 and N276. D304 is a catalytic residue. Residues N339, N346, N465, N547, N566, N588, and N811 are each glycosylated (N-linked (GlcNAc...) asparagine).

Belongs to the glycosyl hydrolase 3 family.

Its subcellular location is the secreted. It carries out the reaction Hydrolysis of terminal, non-reducing beta-D-glucosyl residues with release of beta-D-glucose.. Its pathway is glycan metabolism; cellulose degradation. Its function is as follows. Beta-glucosidases are one of a number of cellulolytic enzymes involved in the degradation of cellulosic biomass. Catalyzes the last step releasing glucose from the inhibitory cellobiose. The sequence is that of Probable beta-glucosidase ARB_05654 from Arthroderma benhamiae (strain ATCC MYA-4681 / CBS 112371) (Trichophyton mentagrophytes).